Consider the following 614-residue polypeptide: Fructokinase-like 2, chloroplastic (614 aa).

The N-terminal 44 residues, 1–44 (MASLSFTQFLSFPRCNADVPCLLQSHGFVKFRGERWNGKQSFSM), are a transit peptide targeting the chloroplast. Disordered stretches follow at residues 47–75 (GRRKLSESAPLEEEGNDGNGAVVGKKPSK) and 542–592 (GYPP…YVMK). A compositionally biased stretch (acidic residues) spans 548–563 (DMEEEEDDEEEDEVES). Positions 571-583 (ITEKEYRTSKPYD) are enriched in basic and acidic residues.

It belongs to the carbohydrate kinase PfkB family. As to quaternary structure, interacts with CITRX/TRXz. Binds to FLN1 and PTAC5. Associates with the plastid-encoded RNA polymerase (PEP) complex.

It localises to the plastid. Its subcellular location is the chloroplast. Its function is as follows. Required for proper chloroplast development, most likely through regulating plastid-encoded polymerase (PEP) dependent chloroplast transcription. Acts as a component of the transcriptionally active plastid chromosome that is required for plastid gene expression. This chain is Fructokinase-like 2, chloroplastic, found in Arabidopsis thaliana (Mouse-ear cress).